Reading from the N-terminus, the 631-residue chain is 1-deoxy-D-xylulose-5-phosphate synthase (631 aa).

A disordered region spans residues 1 to 21 (MPTTFHEIPRERPLTPLLDSA). Thiamine diphosphate is bound by residues His87 and 128 to 130 (GHS). Asp159 contributes to the Mg(2+) binding site. Thiamine diphosphate contacts are provided by residues 160-161 (GA), Asn188, Phe295, and Glu377. Residue Asn188 coordinates Mg(2+).

The protein belongs to the transketolase family. DXPS subfamily. In terms of assembly, homodimer. Mg(2+) is required as a cofactor. It depends on thiamine diphosphate as a cofactor.

The catalysed reaction is D-glyceraldehyde 3-phosphate + pyruvate + H(+) = 1-deoxy-D-xylulose 5-phosphate + CO2. Its pathway is metabolic intermediate biosynthesis; 1-deoxy-D-xylulose 5-phosphate biosynthesis; 1-deoxy-D-xylulose 5-phosphate from D-glyceraldehyde 3-phosphate and pyruvate: step 1/1. In terms of biological role, catalyzes the acyloin condensation reaction between C atoms 2 and 3 of pyruvate and glyceraldehyde 3-phosphate to yield 1-deoxy-D-xylulose-5-phosphate (DXP). The polypeptide is 1-deoxy-D-xylulose-5-phosphate synthase (Ectopseudomonas mendocina (strain ymp) (Pseudomonas mendocina)).